Consider the following 396-residue polypeptide: Acetate kinase (396 aa).

Position 7 (Asn7) interacts with Mg(2+). Position 14 (Lys14) interacts with ATP. Arg88 serves as a coordination point for substrate. Asp145 functions as the Proton donor/acceptor in the catalytic mechanism. Residues 203 to 207, 278 to 280, and 326 to 330 each bind ATP; these read HAGNG, DAR, and GIGEN. Glu379 contributes to the Mg(2+) binding site.

This sequence belongs to the acetokinase family. Homodimer. It depends on Mg(2+) as a cofactor. The cofactor is Mn(2+).

Its subcellular location is the cytoplasm. It carries out the reaction acetate + ATP = acetyl phosphate + ADP. The protein operates within metabolic intermediate biosynthesis; acetyl-CoA biosynthesis; acetyl-CoA from acetate: step 1/2. Catalyzes the formation of acetyl phosphate from acetate and ATP. Can also catalyze the reverse reaction. This Phytoplasma australiense protein is Acetate kinase.